Consider the following 274-residue polypeptide: Tryptophan synthase alpha chain (274 aa).

Active-site proton acceptor residues include Glu49 and Asp60.

It belongs to the TrpA family. In terms of assembly, tetramer of two alpha and two beta chains.

It catalyses the reaction (1S,2R)-1-C-(indol-3-yl)glycerol 3-phosphate + L-serine = D-glyceraldehyde 3-phosphate + L-tryptophan + H2O. Its pathway is amino-acid biosynthesis; L-tryptophan biosynthesis; L-tryptophan from chorismate: step 5/5. In terms of biological role, the alpha subunit is responsible for the aldol cleavage of indoleglycerol phosphate to indole and glyceraldehyde 3-phosphate. This chain is Tryptophan synthase alpha chain, found in Gluconacetobacter diazotrophicus (strain ATCC 49037 / DSM 5601 / CCUG 37298 / CIP 103539 / LMG 7603 / PAl5).